Consider the following 354-residue polypeptide: UDP-3-O-acylglucosamine N-acyltransferase (354 aa).

The active-site Proton acceptor is H245.

This sequence belongs to the transferase hexapeptide repeat family. LpxD subfamily. In terms of assembly, homotrimer.

It carries out the reaction a UDP-3-O-[(3R)-3-hydroxyacyl]-alpha-D-glucosamine + a (3R)-hydroxyacyl-[ACP] = a UDP-2-N,3-O-bis[(3R)-3-hydroxyacyl]-alpha-D-glucosamine + holo-[ACP] + H(+). Its pathway is bacterial outer membrane biogenesis; LPS lipid A biosynthesis. In terms of biological role, catalyzes the N-acylation of UDP-3-O-acylglucosamine using 3-hydroxyacyl-ACP as the acyl donor. Is involved in the biosynthesis of lipid A, a phosphorylated glycolipid that anchors the lipopolysaccharide to the outer membrane of the cell. In Anaeromyxobacter dehalogenans (strain 2CP-1 / ATCC BAA-258), this protein is UDP-3-O-acylglucosamine N-acyltransferase.